A 325-amino-acid polypeptide reads, in one-letter code: Gamma-hemolysin component B (325 aa).

Residues 1–25 form the signal peptide; that stretch reads MNMNKLVKSSVATSMALLLLSNTAN.

This sequence belongs to the aerolysin family. Toxicity requires sequential binding and synergistic association of a class S and a class F component which form heterooligomeric complexes. HlgB (class F) associates with either hlgA thus forming an AB toxin or with hlgC thus forming a CB toxin. Interacts with host AMFR.

Toxin that seems to act by forming pores in the membrane of the cell. Has a hemolytic and a leucotoxic activity. Promotes host AMFR-mediated inflammation by mediating 'Lys-27'-linked ubiquitination of TAB3, TAK1-TAB3 complex formation and phosphorylation of TAK1/MAP3K7. In turn, activates host NF-kappa-B signaling pathway. This is Gamma-hemolysin component B (hlgB) from Staphylococcus aureus (strain MRSA252).